A 436-amino-acid polypeptide reads, in one-letter code: Probable transporter MCH1 (436 aa).

7 helical membrane passes run 27–47 (VVAF…LLFT), 66–86 (MISS…GYLA), 93–113 (LLSL…SYLV), 119–139 (SVIG…SLYF), 155–175 (LAIS…AQIL), 188–208 (LEVV…ASFV), and 249–269 (FVSF…ILNI). N-linked (GlcNAc...) asparagine glycosylation is present at N278. The next 5 membrane-spanning stretches (helical) occupy residues 295–312 (VSIM…LGVL), 325–345 (LLVV…SAIL), 347–367 (GVSY…IWGI), 373–393 (TWGS…MFYG), and 410–430 (TAGA…IWYA).

The protein belongs to the major facilitator superfamily.

It is found in the vacuole membrane. Probable transporter. This chain is Probable transporter MCH1 (MCH1), found in Candida albicans (strain SC5314 / ATCC MYA-2876) (Yeast).